The following is a 234-amino-acid chain: Covalently-linked cell wall protein 14 (234 aa).

The first 22 residues, 1-22 (MASFLKISTLIAIVSTLQTTLA), serve as a signal peptide directing secretion. The CFEM domain occupies 23–109 (APPACLLACV…SSEESSASAS (87 aa)). Disulfide bonds link Cys-27–Cys-66, Cys-31–Cys-61, Cys-41–Cys-49, and Cys-51–Cys-82. A heme-binding site is contributed by Asp-46. Over residues 86–207 (SSQSSSSESE…ASSSESTTAT (122 aa)) the composition is skewed to low complexity. Positions 86–208 (SSQSSSSESE…SSSESTTATG (123 aa)) are disordered. Gly-215 is lipidated: GPI-anchor amidated glycine. The propeptide at 216-234 (SAAKVGLGALVGLVGAVLL) is removed in mature form.

Belongs to the CCW14 family. Post-translationally, the GPI-anchor is attached to the protein in the endoplasmic reticulum and serves to target the protein to the cell surface. There, the glucosamine-inositol phospholipid moiety is cleaved off and the GPI-modified mannoprotein is covalently attached via its lipidless GPI glycan remnant to the 1,6-beta-glucan of the outer cell wall layer.

The protein localises to the secreted. It is found in the cell wall. The protein resides in the membrane. In terms of biological role, beta-glucan associated cell wall protein involved in cell wall structure. May serve as cross-linking or coat-forming wall protein. The polypeptide is Covalently-linked cell wall protein 14 (SSR1) (Candida albicans (strain SC5314 / ATCC MYA-2876) (Yeast)).